The sequence spans 450 residues: MSVSLIASDQFRIVVGLGKSGMSLVRFLASRGIAFAVADTREQPPELETLRRDYPQVEVRCGELDVDFLCRANELYVSPGLALATPALQQAAARGVKLSGDIELFARHAKAPIVAISGSNAKSTVTTLVGEMAAKAGKRVAVGGNLGTPALDLLADDIELYVLELSSFQLETTDQLNAEVATVLNISEDHMDRYSGLPAYHLAKHRIFRGARQVVVNRQDALSRPLPVEGRPCWTFGLNPPDFKAFGLREVDGEKYLAFEFQTLMPARELKVRGAHNQSNALAALALGHAAGLPFEPMLEALREFGGLAHRCQWVRERNGVNWYDDSKATNVGAALAAIEGLGADIEGKLVLIAGGDGKGAEFTALREPVKRFCRAVVLLGRDAERLAEALGDAVPLVRVKTLDDAVQQCAELAQAGDAVLLSPACASLDMFKNFEERGRLFAQAAGGLA.

Position 118–124 (118–124 (GSNAKST)) interacts with ATP.

The protein belongs to the MurCDEF family.

Its subcellular location is the cytoplasm. It carries out the reaction UDP-N-acetyl-alpha-D-muramoyl-L-alanine + D-glutamate + ATP = UDP-N-acetyl-alpha-D-muramoyl-L-alanyl-D-glutamate + ADP + phosphate + H(+). Its pathway is cell wall biogenesis; peptidoglycan biosynthesis. Cell wall formation. Catalyzes the addition of glutamate to the nucleotide precursor UDP-N-acetylmuramoyl-L-alanine (UMA). The polypeptide is UDP-N-acetylmuramoylalanine--D-glutamate ligase (Pseudomonas putida (strain ATCC 47054 / DSM 6125 / CFBP 8728 / NCIMB 11950 / KT2440)).